Reading from the N-terminus, the 206-residue chain is RNA-free ribonuclease P (206 aa).

The tract at residues 187-206 (NLAGDDPGHAPPCGPDQPAG) is disordered. A compositionally biased stretch (pro residues) spans 195–206 (HAPPCGPDQPAG).

This sequence belongs to the HARP family.

It catalyses the reaction Endonucleolytic cleavage of RNA, removing 5'-extranucleotides from tRNA precursor.. In terms of biological role, RNA-free RNase P that catalyzes the removal of the 5'-leader sequence from pre-tRNA to produce the mature 5'-terminus. The polypeptide is RNA-free ribonuclease P (Halorhodospira halophila (strain DSM 244 / SL1) (Ectothiorhodospira halophila (strain DSM 244 / SL1))).